A 506-amino-acid polypeptide reads, in one-letter code: Glycine--tRNA ligase (506 aa).

Substrate-binding residues include arginine 99 and glutamate 189. ATP contacts are provided by residues 221–223 (RNE), 231–236 (FRVREL), 306–307 (EI), and 365–368 (GVDR). 236–240 (LEQME) lines the substrate pocket. Position 361-365 (361-365 (EPSAG)) interacts with substrate.

The protein belongs to the class-II aminoacyl-tRNA synthetase family. As to quaternary structure, homodimer.

It is found in the cytoplasm. It carries out the reaction tRNA(Gly) + glycine + ATP = glycyl-tRNA(Gly) + AMP + diphosphate. In terms of biological role, catalyzes the attachment of glycine to tRNA(Gly). The sequence is that of Glycine--tRNA ligase from Deinococcus radiodurans (strain ATCC 13939 / DSM 20539 / JCM 16871 / CCUG 27074 / LMG 4051 / NBRC 15346 / NCIMB 9279 / VKM B-1422 / R1).